Reading from the N-terminus, the 384-residue chain is Probable L-tyrosine/L-aspartate decarboxylase (384 aa).

Lys-233 is modified (N6-(pyridoxal phosphate)lysine).

The protein belongs to the group II decarboxylase family. MfnA subfamily. Pyridoxal 5'-phosphate is required as a cofactor.

It carries out the reaction L-tyrosine + H(+) = tyramine + CO2. The catalysed reaction is L-aspartate + H(+) = beta-alanine + CO2. Its pathway is cofactor biosynthesis; methanofuran biosynthesis. The protein operates within cofactor biosynthesis; coenzyme A biosynthesis. Its function is as follows. Catalyzes the decarboxylation of L-tyrosine to produce tyramine for methanofuran biosynthesis. Can also catalyze the decarboxylation of L-aspartate to produce beta-alanine for coenzyme A (CoA) biosynthesis. This chain is Probable L-tyrosine/L-aspartate decarboxylase, found in Methanococcus maripaludis (strain DSM 14266 / JCM 13030 / NBRC 101832 / S2 / LL).